A 259-amino-acid polypeptide reads, in one-letter code: 4-hydroxy-tetrahydrodipicolinate reductase (259 aa).

Residues 9-14 and Glu-35 contribute to the NAD(+) site; that span reads GAGGRM. NADP(+) is bound at residue Arg-36. NAD(+)-binding positions include 92–94 and 116–119; these read GTT and APNM. The active-site Proton donor/acceptor is His-149. (S)-2,3,4,5-tetrahydrodipicolinate is bound at residue His-150. The Proton donor role is filled by Lys-153. 159–160 contacts (S)-2,3,4,5-tetrahydrodipicolinate; the sequence is GT.

This sequence belongs to the DapB family.

The protein resides in the cytoplasm. It carries out the reaction (S)-2,3,4,5-tetrahydrodipicolinate + NAD(+) + H2O = (2S,4S)-4-hydroxy-2,3,4,5-tetrahydrodipicolinate + NADH + H(+). It catalyses the reaction (S)-2,3,4,5-tetrahydrodipicolinate + NADP(+) + H2O = (2S,4S)-4-hydroxy-2,3,4,5-tetrahydrodipicolinate + NADPH + H(+). The protein operates within amino-acid biosynthesis; L-lysine biosynthesis via DAP pathway; (S)-tetrahydrodipicolinate from L-aspartate: step 4/4. Catalyzes the conversion of 4-hydroxy-tetrahydrodipicolinate (HTPA) to tetrahydrodipicolinate. The polypeptide is 4-hydroxy-tetrahydrodipicolinate reductase (Nitratidesulfovibrio vulgaris (strain DSM 19637 / Miyazaki F) (Desulfovibrio vulgaris)).